The primary structure comprises 101 residues: Apolipoprotein C-II (101 aa).

An N-terminal signal peptide occupies residues 1–22; the sequence is MGTRCLLVLLLVLLVLKCEVQG. A propeptide spans 23 to 28 (removed in mature form); the sequence is DDMARQ. The tract at residues 66–74 is lipid binding; that stretch reads AMDEKIRDM. A lipoprotein lipase cofactor region spans residues 78–101; that stretch reads STAAVRIYTGILTDQILSMLTGDP.

It belongs to the apolipoprotein C2 family. Proapolipoprotein C-II is synthesized as a sialic acid containing glycoprotein which is subsequently desialylated prior to its proteolytic processing. Post-translationally, proapolipoprotein C-II, the major form found in plasma undergoes proteolytic cleavage of its N-terminal hexapeptide to generate the mature form apolipoprotein C-II, which occurs as the minor form in plasma.

Its subcellular location is the secreted. In terms of biological role, component of chylomicrons, very low-density lipoproteins (VLDL), low-density lipoproteins (LDL), and high-density lipoproteins (HDL) in plasma. Plays an important role in lipoprotein metabolism as an activator of lipoprotein lipase, the enzyme which hydrolyzes the triacylglycerols on chylomicrons and VLDL. The chain is Apolipoprotein C-II (APOC2) from Panthera tigris altaica (Siberian tiger).